Here is a 477-residue protein sequence, read N- to C-terminus: MSPQTETKASVGFKAGVKEYKLTYYTPEYQTKDTDILAAFRVTPQPGVPPEEAGAAVAAESSTGTWTTVWTDGLTSLDRYKGRCYRIERVVGEKDQYIAYVAYPLDLFEEGSVTNMFTSIVGNVFGFKALRALRLEDLRIPPAYVKTFQGPPHGIQVERDKLNKYGRPLLGCTIKPKLGLSAKNYGRAVYECLRGGLDFTKDDENVNSQPFMRWRDRFLFCAEALYKAQTETGEIKGHYLNATAGTCEEMIKRAVFARELGVPIVMHDYLTGGFTANTSLAHYCRDNGLLLHTHRAMHAVIDRQKNHGIHFRVLAKALRMSGGDHIHSGTVVGKLEGERDITLGFVDLLRDDFVEQDRSRGIYFTQDWVSLPGVLPVASGGIHVWHMPALTEIFGDDSVLQFGGGTLGHPWGNAPGAVANRLALEACVQARNEGRDLAQEGNEIIREACKWSPELAAACQVWKEIVFNFAAVDVLDK.

The propeptide occupies 1–2 (MS). N-acetylproline is present on Pro-3. N6,N6,N6-trimethyllysine is present on Lys-14. The substrate site is built by Asn-123 and Thr-173. Catalysis depends on Lys-175, which acts as the Proton acceptor. Lys-177 is a substrate binding site. Lys-201, Asp-203, and Glu-204 together coordinate Mg(2+). An N6-carboxylysine modification is found at Lys-201. His-294 serves as the catalytic Proton acceptor. Positions 295, 327, and 379 each coordinate substrate.

It belongs to the RuBisCO large chain family. Type I subfamily. As to quaternary structure, heterohexadecamer of 8 large chains and 8 small chains; disulfide-linked. The disulfide link is formed within the large subunit homodimers. It depends on Mg(2+) as a cofactor. The disulfide bond which can form in the large chain dimeric partners within the hexadecamer appears to be associated with oxidative stress and protein turnover.

The protein localises to the plastid. The protein resides in the chloroplast. It catalyses the reaction 2 (2R)-3-phosphoglycerate + 2 H(+) = D-ribulose 1,5-bisphosphate + CO2 + H2O. The enzyme catalyses D-ribulose 1,5-bisphosphate + O2 = 2-phosphoglycolate + (2R)-3-phosphoglycerate + 2 H(+). In terms of biological role, ruBisCO catalyzes two reactions: the carboxylation of D-ribulose 1,5-bisphosphate, the primary event in carbon dioxide fixation, as well as the oxidative fragmentation of the pentose substrate in the photorespiration process. Both reactions occur simultaneously and in competition at the same active site. This Nicotiana otophora (Tobacco) protein is Ribulose bisphosphate carboxylase large chain.